Consider the following 795-residue polypeptide: MVLKDDNSEKSIELFISIGLDEKTARNTINNNKVTANLTAVIHEAAVTDGCDRNTGNLLYSVATKFPTNALVHRPTLLKYIVNSKIKTPAQLEAAFAFFASTGPEDFKLNEFEEACGVGIEVSPEDIEKAVKGIFEENKKTILEQRYRTNVGELFGHVRKSLPWADPKIVKKLIDEKMYELLGEKTAADNEKPTKKKEKKEKPAKVEEKKAVVETTAEPSEEELNPYTIFPQPEQNFMVHTEVFFSDGSILRCSNTKEVLDKHLKVTGGKVYTRFPPEPNGYLHIGHAKAMFVDFGLAKERGGCCYLRYDDTNPEAEKEEYINHIEEIVKWMGWEPFKITYTSDYFQELYDLAVELIRRGHAYVDHQTADEIKEYREKKMNSPWRDRPIEESLKLFDEMRRGIIEEGKATLRMKQDMQSDNFNMYDLIAYRIKFAPHPKAGDKWCIYPSYDYAHCTVDSLENITHSLCTLEFETRRASYYWLLHSLSLYMPYVWEYSRLNVTNTVMSKRKLNYIVTNKYVDGWDDPRLLTLSGLRRRGVTSTAINAFVRGIGITRSDGSMIHVSRLEHHIREELNKTAPRTMVVLNPLKVVITNLESDKLIELDAKRWPDAQNDDPSAFYKVPFSRVVYIDQSDFRMKDSKDYYGLAPGKSVLLRYAFPIKCTNVVFADDNETVREIHAEYDPEKKSKPKGVLHWVAESSPGEEPIKVEVRLFEKLFNSENPAELNDAWLTDINPNSKMVISGAYAVSTLKDAAVGDRFQFERLGYYAVDKDSEPGKLVFNRTVTLRDSYGKGGK.

Residues 188-220 (ADNEKPTKKKEKKEKPAKVEEKKAVVETTAEPS) are disordered. The span at 200–212 (KEKPAKVEEKKAV) shows a compositional bias: basic and acidic residues. Residues 277-287 (PEPNGYLHIGH) carry the 'HIGH' region motif. ATP is bound by residues 278–280 (EPN) and 284–290 (HIGHAKA). 2 residues coordinate L-glutamine: Asp310 and Tyr450. ATP is bound by residues Thr469, 498–499 (RL), and 506–508 (MSK). The short motif at 505–509 (VMSKR) is the 'KMSKS' region element.

Belongs to the class-I aminoacyl-tRNA synthetase family.

Its subcellular location is the cytoplasm. It is found in the cytosol. It catalyses the reaction tRNA(Gln) + L-glutamine + ATP = L-glutaminyl-tRNA(Gln) + AMP + diphosphate. This chain is Glutamine--tRNA ligase, cytoplasmic, found in Arabidopsis thaliana (Mouse-ear cress).